A 509-amino-acid polypeptide reads, in one-letter code: tRNA (guanine(37)-N(1))-methyltransferase (509 aa).

A mitochondrion-targeting transit peptide spans Met1–Phe57. S-adenosyl-L-methionine contacts are provided by residues His289, Asp327–Leu328, Asp355–Gly356, and Asn387. Positions Thr478–Thr509 are disordered.

The protein belongs to the class I-like SAM-binding methyltransferase superfamily. TRM5/TYW2 family. Monomer.

It is found in the mitochondrion matrix. The protein localises to the nucleus. The protein resides in the cytoplasm. It carries out the reaction guanosine(37) in tRNA + S-adenosyl-L-methionine = N(1)-methylguanosine(37) in tRNA + S-adenosyl-L-homocysteine + H(+). In terms of biological role, involved in mitochondrial tRNA methylation. Specifically methylates the N1 position of guanosine-37 in various tRNAs. Methylation is not dependent on the nature of the nucleoside 5' of the target nucleoside. This is the first step in the biosynthesis of wybutosine (yW), a modified base adjacent to the anticodon of tRNAs and required for accurate decoding. The chain is tRNA (guanine(37)-N(1))-methyltransferase from Macaca mulatta (Rhesus macaque).